The sequence spans 430 residues: Enolase (430 aa).

Position 167 (glutamine 167) interacts with (2R)-2-phosphoglycerate. Glutamate 209 (proton donor) is an active-site residue. Positions 246, 287, and 314 each coordinate Mg(2+). Residues lysine 339, arginine 368, serine 369, and lysine 390 each contribute to the (2R)-2-phosphoglycerate site. The active-site Proton acceptor is the lysine 339.

This sequence belongs to the enolase family. Requires Mg(2+) as cofactor.

Its subcellular location is the cytoplasm. The protein localises to the secreted. The protein resides in the cell surface. It carries out the reaction (2R)-2-phosphoglycerate = phosphoenolpyruvate + H2O. It functions in the pathway carbohydrate degradation; glycolysis; pyruvate from D-glyceraldehyde 3-phosphate: step 4/5. Catalyzes the reversible conversion of 2-phosphoglycerate (2-PG) into phosphoenolpyruvate (PEP). It is essential for the degradation of carbohydrates via glycolysis. In Prochlorococcus marinus (strain MIT 9301), this protein is Enolase.